The primary structure comprises 123 residues: Large ribosomal subunit protein uL29 (123 aa).

This sequence belongs to the universal ribosomal protein uL29 family.

The sequence is that of Large ribosomal subunit protein uL29 (RPL35) from Theileria lestoquardi.